The chain runs to 232 residues: 2,3,4,5-tetrahydropyridine-2,6-dicarboxylate N-acetyltransferase (232 aa).

It belongs to the transferase hexapeptide repeat family. DapH subfamily.

The catalysed reaction is (S)-2,3,4,5-tetrahydrodipicolinate + acetyl-CoA + H2O = L-2-acetamido-6-oxoheptanedioate + CoA. Its pathway is amino-acid biosynthesis; L-lysine biosynthesis via DAP pathway; LL-2,6-diaminopimelate from (S)-tetrahydrodipicolinate (acetylase route): step 1/3. Catalyzes the transfer of an acetyl group from acetyl-CoA to tetrahydrodipicolinate. The chain is 2,3,4,5-tetrahydropyridine-2,6-dicarboxylate N-acetyltransferase from Streptococcus suis (strain 98HAH33).